The primary structure comprises 117 residues: NADH-quinone oxidoreductase subunit A (117 aa).

The next 3 membrane-spanning stretches (helical) occupy residues Trp4–Thr24, Leu64–Val84, and Leu86–Trp106.

The protein belongs to the complex I subunit 3 family. NDH-1 is composed of 14 different subunits. Subunits NuoA, H, J, K, L, M, N constitute the membrane sector of the complex.

The protein localises to the cell membrane. The enzyme catalyses a quinone + NADH + 5 H(+)(in) = a quinol + NAD(+) + 4 H(+)(out). Its function is as follows. NDH-1 shuttles electrons from NADH, via FMN and iron-sulfur (Fe-S) centers, to quinones in the respiratory chain. The immediate electron acceptor for the enzyme in this species is believed to be a menaquinone. Couples the redox reaction to proton translocation (for every two electrons transferred, four hydrogen ions are translocated across the cytoplasmic membrane), and thus conserves the redox energy in a proton gradient. This Desulforamulus reducens (strain ATCC BAA-1160 / DSM 100696 / MI-1) (Desulfotomaculum reducens) protein is NADH-quinone oxidoreductase subunit A.